Consider the following 110-residue polypeptide: UPF0145 protein LMOf2365_0219 (110 aa).

The protein belongs to the UPF0145 family.

The chain is UPF0145 protein LMOf2365_0219 from Listeria monocytogenes serotype 4b (strain F2365).